Here is a 475-residue protein sequence, read N- to C-terminus: Ras-GEF domain-containing family member 1B-B (475 aa).

A compositionally biased stretch (polar residues) spans Met1–Ser19. The segment at Met1–Pro25 is disordered. Residues Arg36–Thr166 enclose the N-terminal Ras-GEF domain. A Ras-GEF domain is found at Asp209–Pro456. A disordered region spans residues Glu452–Met475.

Guanine nucleotide exchange factor (GEF) for Ras family proteins. In Danio rerio (Zebrafish), this protein is Ras-GEF domain-containing family member 1B-B.